Consider the following 119-residue polypeptide: Large ribosomal subunit protein bL17 (119 aa).

Belongs to the bacterial ribosomal protein bL17 family. As to quaternary structure, part of the 50S ribosomal subunit. Contacts protein L32.

The sequence is that of Large ribosomal subunit protein bL17 from Malacoplasma penetrans (strain HF-2) (Mycoplasma penetrans).